The sequence spans 611 residues: UvrABC system protein C (611 aa).

Positions Asp-12–Ile-96 constitute a GIY-YIG domain. The UVR domain maps to Glu-202 to Ala-237.

The protein belongs to the UvrC family. As to quaternary structure, interacts with UvrB in an incision complex.

The protein localises to the cytoplasm. Functionally, the UvrABC repair system catalyzes the recognition and processing of DNA lesions. UvrC both incises the 5' and 3' sides of the lesion. The N-terminal half is responsible for the 3' incision and the C-terminal half is responsible for the 5' incision. The protein is UvrABC system protein C of Nautilia profundicola (strain ATCC BAA-1463 / DSM 18972 / AmH).